A 330-amino-acid polypeptide reads, in one-letter code: 3'-5' exonuclease (330 aa).

Residues 1 to 92 form a disordered region; that stretch reads MDQYLIKMST…DGTPSPEKEI (92 aa). Composition is skewed to basic and acidic residues over residues 27–39 and 48–66; these read NTTR…KEKI and KDTP…ENPP. A phosphoserine mark is found at Ser79 and Ser87. The 3'-5' exonuclease domain maps to 117–289; that stretch reads SADEVMQWVE…IGQVIYRDIE (173 aa). The Mg(2+) site is built by Asp139, Glu141, and Asp277.

It belongs to the WRNexo family.

It is found in the nucleus. In terms of biological role, has exonuclease activity on both single-stranded and duplex templates bearing overhangs, but not blunt ended duplex DNA, and cleaves in a 3'-5' direction. Essential for the formation of DNA replication focal centers. Has an important role in maintaining genome stability. This Drosophila virilis (Fruit fly) protein is 3'-5' exonuclease.